Reading from the N-terminus, the 193-residue chain is Chromophore lyase CpcS/CpeS 4 (193 aa).

Belongs to the CpcS/CpeS biliprotein lyase family.

Its function is as follows. Covalently attaches a chromophore to Cys residue(s) of phycobiliproteins. In Trichodesmium erythraeum (strain IMS101), this protein is Chromophore lyase CpcS/CpeS 4.